Reading from the N-terminus, the 543-residue chain is Chaperonin GroEL 2 (543 aa).

Residues 29 to 32, 86 to 90, G413, 478 to 480, and D494 each bind ATP; these read TLGP, DGTTT, and NAA.

It belongs to the chaperonin (HSP60) family. Forms a cylinder of 14 subunits composed of two heptameric rings stacked back-to-back. Interacts with the co-chaperonin GroES.

The protein resides in the cytoplasm. The catalysed reaction is ATP + H2O + a folded polypeptide = ADP + phosphate + an unfolded polypeptide.. Functionally, together with its co-chaperonin GroES, plays an essential role in assisting protein folding. The GroEL-GroES system forms a nano-cage that allows encapsulation of the non-native substrate proteins and provides a physical environment optimized to promote and accelerate protein folding. This chain is Chaperonin GroEL 2, found in Thermosynechococcus vestitus (strain NIES-2133 / IAM M-273 / BP-1).